The following is a 745-amino-acid chain: Putative cryptochrome DASH, mitochondrial (745 aa).

The N-terminal 22 residues, Met-1–Ile-22, are a transit peptide targeting the mitochondrion. Residues Phe-23–Tyr-166 form the Photolyase/cryptochrome alpha/beta domain. Disordered stretches follow at residues Lys-563–Gly-688 and Gly-702–Ala-745. The segment covering Ser-571–Thr-584 has biased composition (basic residues). The span at Gly-591–Ser-603 shows a compositional bias: low complexity. Residues Gly-604 to Asn-616 show a composition bias toward gly residues. The span at Gln-632–Gly-648 shows a compositional bias: low complexity. 2 stretches are compositionally biased toward gly residues: residues Arg-672 to Gly-688 and Gly-702 to Arg-718. Residues Gln-735–Ala-745 show a composition bias toward polar residues.

The protein belongs to the DNA photolyase class-1 family. It depends on FAD as a cofactor. (6R)-5,10-methylene-5,6,7,8-tetrahydrofolate serves as cofactor.

It is found in the mitochondrion. Functionally, may have a photoreceptor function. This chain is Putative cryptochrome DASH, mitochondrial (cry), found in Neurospora crassa (strain ATCC 24698 / 74-OR23-1A / CBS 708.71 / DSM 1257 / FGSC 987).